The following is a 175-amino-acid chain: 6,7-dimethyl-8-ribityllumazine synthase (175 aa).

Residues phenylalanine 24, 58 to 60 (ALE), and 82 to 84 (AVI) each bind 5-amino-6-(D-ribitylamino)uracil. 87–88 (ET) lines the (2S)-2-hydroxy-3-oxobutyl phosphate pocket. The Proton donor role is filled by histidine 90. Asparagine 115 is a binding site for 5-amino-6-(D-ribitylamino)uracil. Arginine 129 contributes to the (2S)-2-hydroxy-3-oxobutyl phosphate binding site. Residues 151–175 (LEPEEDDEDEDEEDEDFDDEETDRR) form a disordered region. Acidic residues predominate over residues 152–175 (EPEEDDEDEDEEDEDFDDEETDRR).

Belongs to the DMRL synthase family.

The catalysed reaction is (2S)-2-hydroxy-3-oxobutyl phosphate + 5-amino-6-(D-ribitylamino)uracil = 6,7-dimethyl-8-(1-D-ribityl)lumazine + phosphate + 2 H2O + H(+). It participates in cofactor biosynthesis; riboflavin biosynthesis; riboflavin from 2-hydroxy-3-oxobutyl phosphate and 5-amino-6-(D-ribitylamino)uracil: step 1/2. In terms of biological role, catalyzes the formation of 6,7-dimethyl-8-ribityllumazine by condensation of 5-amino-6-(D-ribitylamino)uracil with 3,4-dihydroxy-2-butanone 4-phosphate. This is the penultimate step in the biosynthesis of riboflavin. In Bordetella petrii (strain ATCC BAA-461 / DSM 12804 / CCUG 43448), this protein is 6,7-dimethyl-8-ribityllumazine synthase.